The sequence spans 271 residues: Aquaporin-2 (271 aa).

The Cytoplasmic segment spans residues 1 to 11 (MWELRSIAFSR). A helical transmembrane segment spans residues 12–32 (AVLAEFLATLLFVFFGLGSAL). At 33–40 (QWASSPPS) the chain is on the extracellular side. A helical transmembrane segment spans residues 41-59 (VLQIAVAFGLGIGILVQAL). The Cytoplasmic segment spans residues 60 to 64 (GHVSG). The segment at residues 65-74 (AHINPAVTVA) is an intramembrane region (discontinuously helical). Residues 68-70 (NPA) carry the NPA 1 motif. Residues 75-85 (CLVGCHVSFLR) lie on the Cytoplasmic side of the membrane. Residues 86–107 (AAFYVAAQLLGAVAGAAILHEI) form a helical membrane-spanning segment. Over 108–127 (TPVEIRGDLAVNALHNNATA) the chain is Extracellular. Asn-124 is a glycosylation site (N-linked (GlcNAc...) asparagine). Residues 128-148 (GQAVTVELFLTMQLVLCIFAS) form a helical membrane-spanning segment. At 149–156 (TDERRGDN) the chain is on the cytoplasmic side. A helical transmembrane segment spans residues 157–176 (LGSPALSIGFSVTLGHLLGI). Residues 177-180 (YFTG) lie on the Extracellular side of the membrane. The discontinuously helical intramembrane region spans 181–193 (CSMNPARSLAPAV). The short motif at 184–186 (NPA) is the NPA 2 element. Residues 194-201 (VTGKFDDH) lie on the Extracellular side of the membrane. The helical transmembrane segment at 202–222 (WVFWIGPLVGAIIGSLLYNYL) threads the bilayer. Topologically, residues 223-271 (LFPSAKSLQERLAVLKGLEPDTDWEEREVRRRQSVELHSPQSLPRGSKA) are cytoplasmic. Residues 251-271 (VRRRQSVELHSPQSLPRGSKA) are disordered. Residues Ser-256, Ser-261, Ser-264, and Ser-269 each carry the phosphoserine modification. Over residues 261–271 (SPQSLPRGSKA) the composition is skewed to polar residues.

It belongs to the MIP/aquaporin (TC 1.A.8) family. As to quaternary structure, homotetramer. Post-translationally, ser-256 phosphorylation is necessary and sufficient for expression at the apical membrane. Endocytosis is not phosphorylation-dependent. N-glycosylated. In terms of tissue distribution, detected in kidney, in cortical and the medullary collecting tubules (at protein level). Detected in kidney medulla and cortex.

It localises to the apical cell membrane. The protein localises to the basolateral cell membrane. Its subcellular location is the cell membrane. The protein resides in the cytoplasmic vesicle membrane. It is found in the golgi apparatus. It localises to the trans-Golgi network membrane. The catalysed reaction is H2O(in) = H2O(out). It catalyses the reaction glycerol(in) = glycerol(out). Functionally, forms a water-specific channel that provides the plasma membranes of renal collecting duct with high permeability to water, thereby permitting water to move in the direction of an osmotic gradient. Plays an essential role in renal water homeostasis. Could also be permeable to glycerol. The chain is Aquaporin-2 from Rattus norvegicus (Rat).